Reading from the N-terminus, the 299-residue chain is Ankyrin repeat domain-containing protein 54 (299 aa).

The interval 1 to 27 (MAATGGGAEDESRSGRSSSEGECAVAP) is disordered. Ala-2 is subject to N-acetylalanine. Ser-62 carries the phosphoserine modification. The Nuclear localization signal (NLS) motif lies at 98 to 116 (RRLGPTGKEVHALKRLRDS). ANK repeat units follow at residues 108–137 (HALKRLRDSANANDIETVQQLLEDGADPCA), 141–170 (KGRTALHFASCNGNDQIVQLLLDHGADPNQ), 174–203 (LGNTPLHLAACTNHVPVITTLLRGGARVDA), and 207–239 (AGRTPLHLAKSKLNILQEGHSQCLEAVRLEVKQ). The interval 140 to 240 (DKGRTALHFA…EAVRLEVKQI (101 aa)) is LYN-binding. The Nuclear export signal (NES) signature appears at 282–292 (LLASFTSLSLQ).

As to quaternary structure, interacts (via ankyrin repeat region) with LYN (via SH3-domain) in an activation-independent status of LYN. Forms a multiprotein complex with LYN and HCLS1. Interacts with TSN2, VAV1, DBNL and LASP1.

The protein resides in the nucleus. The protein localises to the cytoplasm. It localises to the midbody. Plays an important role in regulating intracellular signaling events associated with erythroid terminal differentiation. This is Ankyrin repeat domain-containing protein 54 (Ankrd54) from Rattus norvegicus (Rat).